Reading from the N-terminus, the 291-residue chain is N-acetylmannosamine kinase (291 aa).

Residues 5–12 (AIDIGGTK) and 132–139 (GVGGGVVS) contribute to the ATP site. Residues H156, C166, C168, and C173 each contribute to the Zn(2+) site.

This sequence belongs to the ROK (NagC/XylR) family. NanK subfamily. In terms of assembly, homodimer.

The enzyme catalyses an N-acyl-D-mannosamine + ATP = an N-acyl-D-mannosamine 6-phosphate + ADP + H(+). The protein operates within amino-sugar metabolism; N-acetylneuraminate degradation; D-fructose 6-phosphate from N-acetylneuraminate: step 2/5. Catalyzes the phosphorylation of N-acetylmannosamine (ManNAc) to ManNAc-6-P. The sequence is that of N-acetylmannosamine kinase from Escherichia coli (strain SE11).